Here is a 529-residue protein sequence, read N- to C-terminus: Bifunctional purine biosynthesis protein PurH (529 aa).

The region spanning 2–149 (TNLVPVGRAL…KNHRFVNVVT (148 aa)) is the MGS-like domain.

It belongs to the PurH family.

It catalyses the reaction (6R)-10-formyltetrahydrofolate + 5-amino-1-(5-phospho-beta-D-ribosyl)imidazole-4-carboxamide = 5-formamido-1-(5-phospho-D-ribosyl)imidazole-4-carboxamide + (6S)-5,6,7,8-tetrahydrofolate. The catalysed reaction is IMP + H2O = 5-formamido-1-(5-phospho-D-ribosyl)imidazole-4-carboxamide. Its pathway is purine metabolism; IMP biosynthesis via de novo pathway; 5-formamido-1-(5-phospho-D-ribosyl)imidazole-4-carboxamide from 5-amino-1-(5-phospho-D-ribosyl)imidazole-4-carboxamide (10-formyl THF route): step 1/1. The protein operates within purine metabolism; IMP biosynthesis via de novo pathway; IMP from 5-formamido-1-(5-phospho-D-ribosyl)imidazole-4-carboxamide: step 1/1. The polypeptide is Bifunctional purine biosynthesis protein PurH (Cereibacter sphaeroides (strain ATCC 17025 / ATH 2.4.3) (Rhodobacter sphaeroides)).